Consider the following 439-residue polypeptide: IAA-amino acid hydrolase ILR1-like 2 (439 aa).

An N-terminal signal peptide occupies residues 1 to 21 (MALNKLLSLTFQLLLFLLSVS). Cys-137, His-139, Glu-173, His-197, and His-397 together coordinate Mn(2+). The short motif at 436–439 (HEEL) is the Prevents secretion from ER element.

Belongs to the peptidase M20 family. Monomer. Mn(2+) is required as a cofactor. In terms of tissue distribution, expressed in leaves, stems, siliques, seeds and flowers. Detected in the distal tips of cotyledons and seedling leaves, hydathodes of leaves from mature plants, pollen, ovules and developing seeds.

It is found in the endoplasmic reticulum lumen. Hydrolyzes certain amino acid conjugates of the plant growth regulator indole-3-acetic acid (IAA), including IAA-Ala, IAA-Leu, IAA-Met, IAA-Phe, IAA-Ser, IAA-Thr, IAA-Tyr and IAA-Val. Is the most efficient enzyme of the ILL family for IAA-Ala. Not important for IAA-Leu hydrolysis in roots. May act with ILR1 to provide free IAA to germinating seedlings. The polypeptide is IAA-amino acid hydrolase ILR1-like 2 (Arabidopsis thaliana (Mouse-ear cress)).